The following is a 55-amino-acid chain: Ferredoxin (55 aa).

4Fe-4S ferredoxin-type domains follow at residues 2–27 and 28–55; these read HIIT…HEGT and GKYE…VKAE. Cys8, Cys11, Cys14, Cys18, Cys37, Cys40, Cys43, and Cys47 together coordinate [4Fe-4S] cluster.

Requires [4Fe-4S] cluster as cofactor.

Its function is as follows. Ferredoxins are iron-sulfur proteins that transfer electrons in a wide variety of metabolic reactions. This Thermoanaerobacterium thermosaccharolyticum (Clostridium thermosaccharolyticum) protein is Ferredoxin.